The following is a 555-amino-acid chain: Natural resistance-associated macrophage protein 1 (555 aa).

Residues 1-63 are Cytoplasmic-facing; that stretch reads MSGSGPAMAS…STPGFSFRKL (63 aa). Residues 64–81 traverse the membrane as a helical segment; the sequence is WAFTGPGFLMSIAYLDPG. Residues 82 to 90 lie on the Extracellular side of the membrane; that stretch reads NVESDLQCG. Residues 91 to 110 traverse the membrane as a helical segment; sequence AVAGFKLLWVLLWATVLGLL. The Cytoplasmic portion of the chain corresponds to 111-147; that stretch reads CQRLAIRLGVVTGKDLAEICYLYYPRVPRVLLWLMME. A helical membrane pass occupies residues 148-168; sequence IAIIGSDMQEVIGTAIAFSLL. At 169–172 the chain is on the extracellular side; it reads SAGR. A helical transmembrane segment spans residues 173-192; the sequence is IPLWGGVLITITDTLFFLFL. The Cytoplasmic portion of the chain corresponds to 193–201; that stretch reads DKYGLRKLE. The helical transmembrane segment at 202–222 threads the bilayer; sequence AFFGFLITIMALTFGYEYVMV. Over 223-245 the chain is Extracellular; that stretch reads RPAQTEVLKGIFLPYCPGCGREE. The chain crosses the membrane as a helical span at residues 246 to 264; it reads LLQAVGIVGAIIMPHNIFL. The Cytoplasmic portion of the chain corresponds to 265–292; it reads HSSLVKTRAIDRSKKEEVKEANMYFLTE. Residues 293-312 traverse the membrane as a helical segment; that stretch reads SCLALFVSFLINLFVMAVFG. The Extracellular segment spans residues 313–354; sequence EAFYHQRNEDVHNKCVNSSVSRYASIFPINNETVSVDIYQGG. Asn-329 and Asn-343 each carry an N-linked (GlcNAc...) asparagine glycan. The chain crosses the membrane as a helical span at residues 355–374; sequence VILGCYFGAAALYIWAVGIL. Residues 375-405 lie on the Cytoplasmic side of the membrane; it reads AAGQSSTMTGTYAGQFVMEGFLQLRWSRFTR. A helical membrane pass occupies residues 406-423; sequence VLFTRSLAILPTLFVAAF. Over 424-434 the chain is Extracellular; that stretch reads RDVSQLTGMND. A helical transmembrane segment spans residues 435 to 455; it reads LLNVLQSILLPFAVLPVLTFT. Residues 456-471 are Cytoplasmic-facing; sequence SLRPLMHDFANGLLGQ. Residues 472-493 traverse the membrane as a helical segment; sequence VLMSLITGLVCAINVYFVVDFL. The Extracellular segment spans residues 494 to 501; that stretch reads PTLRGLGY. The helical transmembrane segment at 502–521 threads the bilayer; the sequence is LIPLGLLLVAYVAFVTYLLW. Topologically, residues 522-555 are cytoplasmic; that stretch reads TCSIAHGARFLARGRYNRFSFDVTADVPGLAGPH.

The protein belongs to the NRAMP family. As to expression, macrophages; spleen and thymus and at lower level in liver and lung.

It is found in the late endosome membrane. The protein localises to the lysosome membrane. It catalyses the reaction Zn(2+)(in) + H(+)(out) = Zn(2+)(out) + H(+)(in). The enzyme catalyses Fe(2+)(in) + H(+)(out) = Fe(2+)(out) + H(+)(in). The catalysed reaction is Mn(2+)(in) + H(+)(out) = Mn(2+)(out) + H(+)(in). In terms of biological role, macrophage-specific antiporter that fluxes metal ions in either direction against a proton gradient. Localized to late endosomal lysosomal membranes, delivers bivalent cations from the cytosol into these acidic compartments where they may directly affect antimicrobial activity. Involved in iron metabolism and host natural resistance to infection with intracellular parasites. Pathogen resistance involves sequestration of Fe(2+) and Mn(2+), cofactors of both prokaryotic and eukaryotic catalases and superoxide dismutases, not only to protect the macrophage against its own generation of reactive oxygen species, but to deny the cations to the pathogen for synthesis of its protective enzymes. This is Natural resistance-associated macrophage protein 1 (SLC11A1) from Gallus gallus (Chicken).